A 917-amino-acid chain; its full sequence is Isoleucine--tRNA ligase (917 aa).

Residues 57 to 67 (PYANGNLHMGH) carry the 'HIGH' region motif. An L-isoleucyl-5'-AMP-binding site is contributed by Glu554. Residues 595-599 (KMSKS) carry the 'KMSKS' region motif. Position 598 (Lys598) interacts with ATP. Cys886, Cys889, Cys906, and Cys909 together coordinate Zn(2+).

The protein belongs to the class-I aminoacyl-tRNA synthetase family. IleS type 1 subfamily. In terms of assembly, monomer. Requires Zn(2+) as cofactor.

Its subcellular location is the cytoplasm. The enzyme catalyses tRNA(Ile) + L-isoleucine + ATP = L-isoleucyl-tRNA(Ile) + AMP + diphosphate. Functionally, catalyzes the attachment of isoleucine to tRNA(Ile). As IleRS can inadvertently accommodate and process structurally similar amino acids such as valine, to avoid such errors it has two additional distinct tRNA(Ile)-dependent editing activities. One activity is designated as 'pretransfer' editing and involves the hydrolysis of activated Val-AMP. The other activity is designated 'posttransfer' editing and involves deacylation of mischarged Val-tRNA(Ile). This is Isoleucine--tRNA ligase (ileS) from Staphylococcus aureus (strain MSSA476).